Here is a 91-residue protein sequence, read N- to C-terminus: Small ribosomal subunit protein uS19 (91 aa).

The protein belongs to the universal ribosomal protein uS19 family.

In terms of biological role, protein S19 forms a complex with S13 that binds strongly to the 16S ribosomal RNA. The protein is Small ribosomal subunit protein uS19 of Marinomonas sp. (strain MWYL1).